A 470-amino-acid polypeptide reads, in one-letter code: tRNA(Ile)-lysidine synthase (470 aa).

32–37 (SGGVDS) serves as a coordination point for ATP.

It belongs to the tRNA(Ile)-lysidine synthase family.

Its subcellular location is the cytoplasm. The catalysed reaction is cytidine(34) in tRNA(Ile2) + L-lysine + ATP = lysidine(34) in tRNA(Ile2) + AMP + diphosphate + H(+). In terms of biological role, ligates lysine onto the cytidine present at position 34 of the AUA codon-specific tRNA(Ile) that contains the anticodon CAU, in an ATP-dependent manner. Cytidine is converted to lysidine, thus changing the amino acid specificity of the tRNA from methionine to isoleucine. The sequence is that of tRNA(Ile)-lysidine synthase from Shewanella woodyi (strain ATCC 51908 / MS32).